Reading from the N-terminus, the 362-residue chain is Putative integrase ORF3 (362 aa).

Positions 179–359 constitute an Integrase catalytic domain; it reads YEVKEIGLLQ…TPFNFLNSLS (181 aa). Mg(2+)-binding residues include aspartate 190 and aspartate 256.

This sequence belongs to the plectrovirus integrase ORF3 family.

In terms of biological role, this protein may encode an integrase, which is necessary for integration of the viral DNA into host genome. The sequence is that of Putative integrase ORF3 from Spiroplasma melliferum (SpV1).